We begin with the raw amino-acid sequence, 358 residues long: S-adenosylmethionine:tRNA ribosyltransferase-isomerase (358 aa).

Belongs to the QueA family. Monomer.

It is found in the cytoplasm. The catalysed reaction is 7-aminomethyl-7-carbaguanosine(34) in tRNA + S-adenosyl-L-methionine = epoxyqueuosine(34) in tRNA + adenine + L-methionine + 2 H(+). It functions in the pathway tRNA modification; tRNA-queuosine biosynthesis. Functionally, transfers and isomerizes the ribose moiety from AdoMet to the 7-aminomethyl group of 7-deazaguanine (preQ1-tRNA) to give epoxyqueuosine (oQ-tRNA). This chain is S-adenosylmethionine:tRNA ribosyltransferase-isomerase, found in Desulfotalea psychrophila (strain LSv54 / DSM 12343).